The following is a 309-amino-acid chain: Protein FdhE homolog (309 aa).

It belongs to the FdhE family.

The protein resides in the cytoplasm. Its function is as follows. Necessary for formate dehydrogenase activity. This is Protein FdhE homolog from Pectobacterium atrosepticum (strain SCRI 1043 / ATCC BAA-672) (Erwinia carotovora subsp. atroseptica).